The chain runs to 20 residues: Large ribosomal subunit protein bL33 (20 aa).

This sequence belongs to the bacterial ribosomal protein bL33 family.

This chain is Large ribosomal subunit protein bL33 (rpmG), found in Brevundimonas vesicularis (Pseudomonas vesicularis).